The sequence spans 472 residues: UDP-glycosyltransferase 708G2 (472 aa).

His-23 (proton acceptor) is an active-site residue. An anthocyanidin is bound at residue His-23. The Charge relay role is filled by Asp-117. Thr-140 contacts UDP-alpha-D-glucose. The tract at residues 283–284 (SR) is UDP. Val-346, Gln-348, His-363, Trp-366, Asn-367, Ser-368, and Glu-371 together coordinate UDP-alpha-D-glucose. Residue Gly-386 participates in an anthocyanidin binding. The UDP-alpha-D-glucose site is built by Asp-387 and Gln-388.

Belongs to the UDP-glycosyltransferase family. As to expression, expressed at low levels in leaves, flowers and immature leaves.

It carries out the reaction a 3'-hydro-2'-hydroxy-beta-oxodihydrochalcone + UDP-alpha-D-glucose = a 3'-(beta-D-glucopyranosyl)-2'-hydroxy-beta-oxodihydrochalcone + UDP + H(+). In terms of biological role, UDP-glucose-dependent glucosyltransferase catalyzing the C-glucosylation of 2-hydroxyflavanones (2-hydroxylnaringenin and 2-hydroxypinocembrin) and phloretin. No activity with flavanones, flavones or flavonols. Exhibits C-glucosylation activity toward 2-phenyl-2',4',6'-trihydroxyacetophenone. Can use UDP-xylose as sugar donor, but catalytic efficiency is much lower toward UDP-xylose than toward UDP-glucose. This is UDP-glycosyltransferase 708G2 (UGT708G2) from Citrus unshiu (Satsuma mandarin).